Here is a 160-residue protein sequence, read N- to C-terminus: 6,7-dimethyl-8-ribityllumazine synthase (160 aa).

Residues phenylalanine 22, 57–59, and 81–83 each bind 5-amino-6-(D-ribitylamino)uracil; these read TYE and TII. Residue 86–87 participates in (2S)-2-hydroxy-3-oxobutyl phosphate binding; sequence QT. The Proton donor role is filled by histidine 89. Leucine 114 serves as a coordination point for 5-amino-6-(D-ribitylamino)uracil. Residue arginine 128 coordinates (2S)-2-hydroxy-3-oxobutyl phosphate.

It belongs to the DMRL synthase family. As to quaternary structure, forms an icosahedral capsid composed of 60 subunits, arranged as a dodecamer of pentamers.

It catalyses the reaction (2S)-2-hydroxy-3-oxobutyl phosphate + 5-amino-6-(D-ribitylamino)uracil = 6,7-dimethyl-8-(1-D-ribityl)lumazine + phosphate + 2 H2O + H(+). It functions in the pathway cofactor biosynthesis; riboflavin biosynthesis; riboflavin from 2-hydroxy-3-oxobutyl phosphate and 5-amino-6-(D-ribitylamino)uracil: step 1/2. Catalyzes the formation of 6,7-dimethyl-8-ribityllumazine by condensation of 5-amino-6-(D-ribitylamino)uracil with 3,4-dihydroxy-2-butanone 4-phosphate. This is the penultimate step in the biosynthesis of riboflavin. The sequence is that of 6,7-dimethyl-8-ribityllumazine synthase from Buchnera aphidicola subsp. Acyrthosiphon pisum (strain Tuc7).